The sequence spans 424 residues: GTPase HflX (424 aa).

Positions 194–364 (YTVALTGYTG…AVVEMLPEKV (171 aa)) constitute a Hflx-type G domain. Residues 200 to 207 (GYTGAGKT), 225 to 229 (FATLS), 246 to 249 (DTIG), 314 to 317 (NKID), and 342 to 344 (SAA) contribute to the GTP site. Mg(2+) is bound by residues Thr207 and Thr227.

This sequence belongs to the TRAFAC class OBG-HflX-like GTPase superfamily. HflX GTPase family. In terms of assembly, monomer. Associates with the 50S ribosomal subunit. The cofactor is Mg(2+).

The protein resides in the cytoplasm. In terms of biological role, GTPase that associates with the 50S ribosomal subunit and may have a role during protein synthesis or ribosome biogenesis. This chain is GTPase HflX, found in Thermofilum pendens (strain DSM 2475 / Hrk 5).